We begin with the raw amino-acid sequence, 631 residues long: Altered inheritance of mitochondria protein 9, mitochondrial (631 aa).

The N-terminal 41 residues, 1 to 41, are a transit peptide targeting the mitochondrion; that stretch reads MLSRVVRQRSRSAISSFKLRAHAAFAETRIGVGISVQATRL.

The protein belongs to the AIM9 family.

Its subcellular location is the mitochondrion. The chain is Altered inheritance of mitochondria protein 9, mitochondrial (AIM9) from Scheffersomyces stipitis (strain ATCC 58785 / CBS 6054 / NBRC 10063 / NRRL Y-11545) (Yeast).